The following is a 311-amino-acid chain: Putative S-adenosyl-L-methionine-dependent methyltransferase MSMEG_0095/MSMEI_0092 (311 aa).

S-adenosyl-L-methionine contacts are provided by residues D134 and 163 to 164 (DL).

The protein belongs to the UPF0677 family.

In terms of biological role, exhibits S-adenosyl-L-methionine-dependent methyltransferase activity. In Mycolicibacterium smegmatis (strain ATCC 700084 / mc(2)155) (Mycobacterium smegmatis), this protein is Putative S-adenosyl-L-methionine-dependent methyltransferase MSMEG_0095/MSMEI_0092.